Consider the following 304-residue polypeptide: Sulfate adenylyltransferase subunit 2 (304 aa).

It belongs to the PAPS reductase family. CysD subfamily. In terms of assembly, heterodimer composed of CysD, the smaller subunit, and CysNC.

The enzyme catalyses sulfate + ATP + H(+) = adenosine 5'-phosphosulfate + diphosphate. It functions in the pathway sulfur metabolism; hydrogen sulfide biosynthesis; sulfite from sulfate: step 1/3. Functionally, with CysN forms the ATP sulfurylase (ATPS) that catalyzes the adenylation of sulfate producing adenosine 5'-phosphosulfate (APS) and diphosphate, the first enzymatic step in sulfur assimilation pathway. APS synthesis involves the formation of a high-energy phosphoric-sulfuric acid anhydride bond driven by GTP hydrolysis by CysN coupled to ATP hydrolysis by CysD. This is Sulfate adenylyltransferase subunit 2 from Xylella fastidiosa (strain Temecula1 / ATCC 700964).